An 811-amino-acid polypeptide reads, in one-letter code: DNA gyrase subunit A (811 aa).

The region spanning 30–493 (LPDVRDGLKP…LEEDIGKEDL (464 aa)) is the Topo IIA-type catalytic domain. The active-site O-(5'-phospho-DNA)-tyrosine intermediate is Y118. The GyrA-box signature appears at 520-526 (QGRGGRG).

This sequence belongs to the type II topoisomerase GyrA/ParC subunit family. In terms of assembly, heterotetramer, composed of two GyrA and two GyrB chains. In the heterotetramer, GyrA contains the active site tyrosine that forms a transient covalent intermediate with DNA, while GyrB binds cofactors and catalyzes ATP hydrolysis.

It localises to the cytoplasm. The enzyme catalyses ATP-dependent breakage, passage and rejoining of double-stranded DNA.. In terms of biological role, a type II topoisomerase that negatively supercoils closed circular double-stranded (ds) DNA in an ATP-dependent manner to modulate DNA topology and maintain chromosomes in an underwound state. Negative supercoiling favors strand separation, and DNA replication, transcription, recombination and repair, all of which involve strand separation. Also able to catalyze the interconversion of other topological isomers of dsDNA rings, including catenanes and knotted rings. Type II topoisomerases break and join 2 DNA strands simultaneously in an ATP-dependent manner. This chain is DNA gyrase subunit A, found in Deinococcus deserti (strain DSM 17065 / CIP 109153 / LMG 22923 / VCD115).